The primary structure comprises 150 residues: Putative transmembrane protein DDB_G0277665 (150 aa).

A run of 2 helical transmembrane segments spans residues 4-24 and 42-62; these read TLIIIIVSVIVGYLISHFNIL and VIVGAIVGQALIYFFVFFLPL.

It localises to the membrane. This Dictyostelium discoideum (Social amoeba) protein is Putative transmembrane protein DDB_G0277665.